The following is a 297-amino-acid chain: Homoserine kinase (297 aa).

82–92 (PLTRGLGSSAS) is an ATP binding site.

The protein belongs to the GHMP kinase family. Homoserine kinase subfamily.

It localises to the cytoplasm. The enzyme catalyses L-homoserine + ATP = O-phospho-L-homoserine + ADP + H(+). Its pathway is amino-acid biosynthesis; L-threonine biosynthesis; L-threonine from L-aspartate: step 4/5. Its function is as follows. Catalyzes the ATP-dependent phosphorylation of L-homoserine to L-homoserine phosphate. The sequence is that of Homoserine kinase from Bacillus cereus (strain G9842).